A 183-amino-acid chain; its full sequence is ATP synthase subunit b, chloroplastic (183 aa).

The helical transmembrane segment at 28-48 (DIFEANVINILLLLFGLIYVL) threads the bilayer.

It belongs to the ATPase B chain family. In terms of assembly, F-type ATPases have 2 components, F(1) - the catalytic core - and F(0) - the membrane proton channel. F(1) has five subunits: alpha(3), beta(3), gamma(1), delta(1), epsilon(1). F(0) has four main subunits: a(1), b(1), b'(1) and c(10-14). The alpha and beta chains form an alternating ring which encloses part of the gamma chain. F(1) is attached to F(0) by a central stalk formed by the gamma and epsilon chains, while a peripheral stalk is formed by the delta, b and b' chains.

The protein localises to the plastid. It is found in the chloroplast thylakoid membrane. In terms of biological role, f(1)F(0) ATP synthase produces ATP from ADP in the presence of a proton or sodium gradient. F-type ATPases consist of two structural domains, F(1) containing the extramembraneous catalytic core and F(0) containing the membrane proton channel, linked together by a central stalk and a peripheral stalk. During catalysis, ATP synthesis in the catalytic domain of F(1) is coupled via a rotary mechanism of the central stalk subunits to proton translocation. Component of the F(0) channel, it forms part of the peripheral stalk, linking F(1) to F(0). This chain is ATP synthase subunit b, chloroplastic, found in Pyropia yezoensis (Susabi-nori).